Here is a 593-residue protein sequence, read N- to C-terminus: NADH-quinone oxidoreductase subunit C/D 1 (593 aa).

Positions 1 to 193 (MPWAKEGDLQ…DNLEGLMNYD (193 aa)) are NADH dehydrogenase I subunit C. The NADH dehydrogenase I subunit D stretch occupies residues 217–593 (AQIVLNWGPL…IDPVVGETDR (377 aa)).

The protein in the N-terminal section; belongs to the complex I 30 kDa subunit family. It in the C-terminal section; belongs to the complex I 49 kDa subunit family. In terms of assembly, NDH-1 is composed of 13 different subunits. Subunits NuoB, CD, E, F, and G constitute the peripheral sector of the complex.

The protein localises to the cell inner membrane. It catalyses the reaction a quinone + NADH + 5 H(+)(in) = a quinol + NAD(+) + 4 H(+)(out). Functionally, NDH-1 shuttles electrons from NADH, via FMN and iron-sulfur (Fe-S) centers, to quinones in the respiratory chain. The immediate electron acceptor for the enzyme in this species is believed to be ubiquinone. Couples the redox reaction to proton translocation (for every two electrons transferred, four hydrogen ions are translocated across the cytoplasmic membrane), and thus conserves the redox energy in a proton gradient. This is NADH-quinone oxidoreductase subunit C/D 1 (nuoC1) from Aquifex aeolicus (strain VF5).